The following is a 109-amino-acid chain: U3-lycotoxin-Ls1x (109 aa).

Residues 1 to 20 (MKFVLLFGVLLVTLFSYSSA) form the signal peptide. Positions 21–44 (EMLDDFDQADEDELLSLIEKEEAR) are excised as a propeptide. 4 cysteine pairs are disulfide-bonded: Cys48-Cys63, Cys55-Cys72, Cys62-Cys88, and Cys74-Cys86.

Belongs to the neurotoxin 19 (CSTX) family. 01 subfamily. Expressed by the venom gland.

The protein resides in the secreted. This chain is U3-lycotoxin-Ls1x, found in Lycosa singoriensis (Wolf spider).